A 467-amino-acid polypeptide reads, in one-letter code: MTCRTRFAPSPTGYLHIGGARTALYCWLEARHRGGEFVLRIEDTDRERSTQGAIDAILEAMEWLGLDYDEGPIYQTDRVARYLEVAEQLVADGKAYYAYETREELDAMREAAMAKQEKPRYNGAARELGLPRKDDPNRVIRFKNPLQGTVVFDDLIKGRIEIANSELDDMVIFRPDGFPTYNFAVVVDDWDMGITEVIRGDDHINNTPRQINLYEGIGAPVPKFGHMPMILDEQGAKLSKRTGAADVMQYKDAGYLPDALLSYLARLGWSHGDQELFSRQELIELFDVKDCNSKASRLDMAKLGWVNQHFLKTEDVAAIVPHLVYQLQKLGLDVAAGPAPEDVVIALRERVQTLKEMAEKAVVWYQPLTEYDEAAVAKHFKAGAEVALGKARELLAALPEWTAEAVGVALHDTAAALEMGMGKVAQPLRVAITGTQVSPDISHTVYLAGRDQALKRIDVAITKVATA.

A 'HIGH' region motif is present at residues 9 to 19 (PSPTGYLHIGG). The 'KMSKS' region signature appears at 237–241 (KLSKR). Position 240 (Lys240) interacts with ATP.

Belongs to the class-I aminoacyl-tRNA synthetase family. Glutamate--tRNA ligase type 1 subfamily. As to quaternary structure, monomer.

The protein localises to the cytoplasm. It carries out the reaction tRNA(Glu) + L-glutamate + ATP = L-glutamyl-tRNA(Glu) + AMP + diphosphate. Functionally, catalyzes the attachment of glutamate to tRNA(Glu) in a two-step reaction: glutamate is first activated by ATP to form Glu-AMP and then transferred to the acceptor end of tRNA(Glu). In Stenotrophomonas maltophilia (strain R551-3), this protein is Glutamate--tRNA ligase.